A 1186-amino-acid polypeptide reads, in one-letter code: MSVACVLKRKAVLWQDSFSPHLKHHPQEPANPNMPVVLTSGTGSQAQPQPAANQALAAGTHSSPVPGSIGVAGRSQDDAMVDYFFQRQHGEQLGGGGSGGGGYNNSKHRWPTGDNIHAEHQVRSMDELNHDFQALALEGRAMGEQLLPGKKFWETDESSKDGPKGIFLGDQWRDSAWGTSDHSVSQPIMVQRRPGQSFHVNSEVNSVLSPRSESGGLGVSMVEYVLSSSPGDSCLRKGGFGPRDADSDENDKGEKKNKGTFDGDKLGDLKEEGDVMDKTNGLPVQNGIDADVKDFSRTPGNCQNSANEVDLLGPNQNGSEGLAQLTSTNGAKPVEDFSNMESQSVPLDPMEHVGMEPLQFDYSGTQVPVDSAAATVGLFDYNSQQQLFQRPNALAVQQLTAAQQQQYALAAAHQPHIGLAPAAFVPNPYIISAAPPGTDPYTAGLAAAATLGPAVVPHQYYGVTPWGVYPASLFQQQAAAAAAATNSANQQTTPQAQQGQQQVLRGGASQRPLTPNQNQQGQQTDPLVAAAAVNSALAFGQGLAAGMPGYPVLAPAAYYDQTGALVVNAGARNGLGAPVRLVAPAPVIISSSAAQAAVAAAAASANGAAGGLAGTTNGPFRPLGTQQPQPQPQQQPNNNLASSSFYGNNSLNSNSQSSSLFSQGSAQPANTSLGFGSSSSLGATLGSALGGFGTAVANSNTGSGSRRDSLTGSSDLYKRTSSSLTPIGHSFYNGLSFSSSPGPVGMPLPSQGPGHSQTPPPSLSSHGSSSSLNLGGLTNGSGRYISAAPGAEAKYRSASSASSLFSPSSTLFSSSRLRYGMSDVMPSGRSRLLEDFRNNRYPNLQLREIAGHIMEFSQDQHGSRFIQLKLERATPAERQLVFNEILQAAYQLMVDVFGNYVIQKFFEFGSLEQKLALAERIRGHVLSLALQMYGCRVIQKALEFIPSDQQNEMVRELDGHVLKCVKDQNGNHVVQKCIECVQPQSLQFIIDAFKGQVFALSTHPYGCRVIQRILEHCLPDQTLPILEELHQHTEQLVQDQYGNYVIQHVLEHGRPEDKSKIVAEIRGNVLVLSQHKFASNVVEKCVTHASRTERAVLIDEVCTMNDGPHSALYTMMKDQYANYVVQKMIDVAEPGQRKIVMHKIRPHIATLRKYTYGKHILAKLEKYYMKNGVDLGPICGPPNGII.

S2 bears the N-acetylserine mark. S19 bears the Phosphoserine mark. A disordered region spans residues 22 to 73 (LKHHPQEPANPNMPVVLTSGTGSQAQPQPAANQALAAGTHSSPVPGSIGVAG). Low complexity predominate over residues 45–58 (QAQPQPAANQALAA). Phosphoserine occurs at positions 75, 98, and 106. T112 is subject to Phosphothreonine. 5 positions are modified to phosphoserine: S124, S159, S197, S209, and S229. The tract at residues 233–272 (SCLRKGGFGPRDADSDENDKGEKKNKGTFDGDKLGDLKEE) is disordered. Over residues 250-272 (NDKGEKKNKGTFDGDKLGDLKEE) the composition is skewed to basic and acidic residues. S305 bears the Phosphoserine mark. Over residues 485–502 (TNSANQQTTPQAQQGQQQ) the composition is skewed to low complexity. Disordered regions lie at residues 485-524 (TNSA…GQQT) and 613-648 (AGTT…FYGN). The span at 511 to 524 (RPLTPNQNQQGQQT) shows a compositional bias: polar residues. T514 is modified (phosphothreonine). Low complexity predominate over residues 626–639 (QQPQPQPQQQPNNN). 2 positions are modified to phosphoserine: S709 and S714. Residues 742–773 (GPVGMPLPSQGPGHSQTPPPSLSSHGSSSSLN) form a disordered region. Residues 763–773 (LSSHGSSSSLN) are compositionally biased toward low complexity. R796 is subject to Omega-N-methylarginine. Residues S806 and S822 each carry the phosphoserine modification. Residues 828–1168 (GRSRLLEDFR…HILAKLEKYY (341 aa)) enclose the PUM-HD domain. Pumilio repeat units follow at residues 848 to 883 (EIAG…LVFN), 884 to 919 (EILQ…ALAE), 920 to 955 (RIRG…EMVR), 956 to 991 (ELDG…FIID), 992 to 1027 (AFKG…PILE), 1028 to 1063 (ELHQ…KIVA), 1064 to 1099 (EIRG…VLID), and 1103 to 1142 (TMND…IVMH). The interval 863 to 867 (SRFIQ) is adenine-nucleotide binding in RNA target. The interval 899-903 (NYVIQ) is uracil-nucleotide binding in RNA target. Residues 935 to 939 (CRVIQ) are adenine-nucleotide binding in RNA target. Residues 971–975 (NHVVQ) form a non-specific-nucleotide binding in RNA target region. The interval 1007–1011 (CRVIQ) is adenine-nucleotide binding in RNA target. The tract at residues 1043–1047 (NYVIQ) is uracil-nucleotide binding in RNA target. Residues 1079–1083 (SNVVE) form a guanine-nucleotide binding in RNA target region. The tract at residues 1122 to 1126 (NYVVQ) is uracil-nucleotide binding in RNA target.

In terms of assembly, recruits the CCR4-POP2-NOT deadenylase leading to translational inhibition and mRNA degradation. In case of viral infection, interacts with DHX58. Interacts with TRIM71 (via NHL repeats) in an RNA-dependent manner. Phosphorylation at Ser-714 promotes RNA-binding activity. Following growth factor stimulation phosphorylated at Ser-714, promoting binding to the 3'-UTR of CDKN1B/p27 mRNA. In terms of tissue distribution, expressed in brain, heart, kidney, muscle, intestine and stomach. Not expressed in cerebellum, corpus callosum, caudate nucleus, hippocampus, medulla oblongata and putamen. Expressed in all fetal tissues tested.

The protein resides in the cytoplasm. It is found in the P-body. It localises to the cytoplasmic granule. Its function is as follows. Sequence-specific RNA-binding protein that acts as a post-transcriptional repressor by binding the 3'-UTR of mRNA targets. Binds to an RNA consensus sequence, the Pumilio Response Element (PRE), 5'-UGUANAUA-3', that is related to the Nanos Response Element (NRE). Mediates post-transcriptional repression of transcripts via different mechanisms: acts via direct recruitment of the CCR4-POP2-NOT deadenylase leading to translational inhibition and mRNA degradation. Also mediates deadenylation-independent repression by promoting accessibility of miRNAs. Following growth factor stimulation, phosphorylated and binds to the 3'-UTR of CDKN1B/p27 mRNA, inducing a local conformational change that exposes miRNA-binding sites, promoting association of miR-221 and miR-222, efficient suppression of CDKN1B/p27 expression, and rapid entry to the cell cycle. Acts as a post-transcriptional repressor of E2F3 mRNAs by binding to its 3'-UTR and facilitating miRNA regulation. Represses a program of genes necessary to maintain genomic stability such as key mitotic, DNA repair and DNA replication factors. Its ability to repress those target mRNAs is regulated by the lncRNA NORAD (non-coding RNA activated by DNA damage) which, due to its high abundance and multitude of PUMILIO binding sites, is able to sequester a significant fraction of PUM1 and PUM2 in the cytoplasm. Involved in neuronal functions by regulating ATXN1 mRNA levels: acts by binding to the 3'-UTR of ATXN1 transcripts, leading to their down-regulation independently of the miRNA machinery. Plays a role in cytoplasmic sensing of viral infection. In testis, acts as a post-transcriptional regulator of spermatogenesis by binding to the 3'-UTR of mRNAs coding for regulators of p53/TP53. Involved in embryonic stem cell renewal by facilitating the exit from the ground state: acts by targeting mRNAs coding for naive pluripotency transcription factors and accelerates their down-regulation at the onset of differentiation. Binds specifically to miRNA MIR199A precursor, with PUM2, regulates miRNA MIR199A expression at a postranscriptional level. This is Pumilio homolog 1 from Homo sapiens (Human).